The chain runs to 327 residues: Altered inheritance rate of mitochondria protein 25 (327 aa).

This sequence belongs to the phospholipid scramblase family.

It localises to the mitochondrion. The protein is Altered inheritance rate of mitochondria protein 25 (AIM25) of Saccharomyces cerevisiae (strain ATCC 204508 / S288c) (Baker's yeast).